Here is a 128-residue protein sequence, read N- to C-terminus: Small ribosomal subunit protein uS14m (128 aa).

This sequence belongs to the universal ribosomal protein uS14 family. In terms of assembly, component of the mitochondrial ribosome small subunit (28S) which comprises a 12S rRNA and about 30 distinct proteins. Interacts with LIAT1.

The protein localises to the mitochondrion. In Bos taurus (Bovine), this protein is Small ribosomal subunit protein uS14m (MRPS14).